Consider the following 557-residue polypeptide: Glypican-1 (557 aa).

The signal sequence occupies residues 1–23 (MELRTRGWWLLCAAAALVVCARG). Cystine bridges form between Cys-32–Cys-68, Cys-62–Cys-255, Cys-69–Cys-258, Cys-190–Cys-342, Cys-245–Cys-278, Cys-267–Cys-414, and Cys-271–Cys-400. 2 N-linked (GlcNAc...) asparagine glycosylation sites follow: Asn-79 and Asn-116. The interval 477 to 531 (FQDASDDGSGSGSGGGCPDDTCGRRVSKKSSSSRTPLTHALPGLSEQEGQKTSAA) is disordered. Residues Ser-485, Ser-487, and Ser-489 are each glycosylated (O-linked (Xyl...) (heparan sulfate) serine). Ser-529 is lipidated: GPI-anchor amidated serine. Positions 530–557 (AATCPEPHSFFLLFLVTLVLAAARPRWR) are cleaved as a propeptide — removed in mature form.

Belongs to the glypican family. S-nitrosylated in a Cu(2+)-dependent manner. Nitric acid (NO) is released from the nitrosylated cysteines by ascorbate or by some other reducing agent, in a Cu(2+) or Zn(2+) dependent manner. This free nitric oxide is then capable of cleaving the heparan sulfate side chains. In terms of processing, N- and O-glycosylated. N-glycosylation is mainly of the complex type containing sialic acid. O-glycosylated with heparan sulfate. The heparan sulfate chains can be cleaved either by the action of heparanase or, degraded by a deaminative process that uses nitric oxide (NO) released from the S-nitrosylated cysteines. This process is triggered by ascorbate, or by some other reducing agent, in a Cu(2+)- or Zn(2+) dependent manner. Cu(2+) ions are provided by ceruloproteins such as APP, PRNP or CP which associate with GCP1 in intracellular compartments or lipid rafts. Post-translationally, this cell-associated glypican is further processed to give rise to a medium-released species.

It is found in the cell membrane. It localises to the endosome. The protein resides in the secreted. The protein localises to the extracellular space. Cell surface proteoglycan that bears heparan sulfate. Binds, via the heparan sulfate side chains, alpha-4 (V) collagen and participates in Schwann cell myelination. May act as a catalyst in increasing the rate of conversion of prion protein PRPN(C) to PRNP(Sc) via associating (via the heparan sulfate side chains) with both forms of PRPN, targeting them to lipid rafts and facilitating their interaction. Required for proper skeletal muscle differentiation by sequestering FGF2 in lipid rafts preventing its binding to receptors (FGFRs) and inhibiting the FGF-mediated signaling. Binds Cu(2+) or Zn(2+) ions. This is Glypican-1 (Gpc1) from Mus musculus (Mouse).